A 155-amino-acid polypeptide reads, in one-letter code: Ribosome maturation factor RimP (155 aa).

This sequence belongs to the RimP family.

The protein localises to the cytoplasm. Functionally, required for maturation of 30S ribosomal subunits. The polypeptide is Ribosome maturation factor RimP (Staphylococcus carnosus (strain TM300)).